The primary structure comprises 482 residues: Glutamyl-tRNA(Gln) amidotransferase subunit A (482 aa).

Residues Lys-74 and Ser-149 each act as charge relay system in the active site. Ser-173 acts as the Acyl-ester intermediate in catalysis.

The protein belongs to the amidase family. GatA subfamily. Heterotrimer of A, B and C subunits.

It carries out the reaction L-glutamyl-tRNA(Gln) + L-glutamine + ATP + H2O = L-glutaminyl-tRNA(Gln) + L-glutamate + ADP + phosphate + H(+). Its function is as follows. Allows the formation of correctly charged Gln-tRNA(Gln) through the transamidation of misacylated Glu-tRNA(Gln) in organisms which lack glutaminyl-tRNA synthetase. The reaction takes place in the presence of glutamine and ATP through an activated gamma-phospho-Glu-tRNA(Gln). The sequence is that of Glutamyl-tRNA(Gln) amidotransferase subunit A from Prochlorococcus marinus (strain AS9601).